Reading from the N-terminus, the 278-residue chain is Orotidine 5'-phosphate decarboxylase (278 aa).

Lys-95 functions as the Proton donor in the catalytic mechanism.

The protein belongs to the OMP decarboxylase family. Type 2 subfamily.

The catalysed reaction is orotidine 5'-phosphate + H(+) = UMP + CO2. The protein operates within pyrimidine metabolism; UMP biosynthesis via de novo pathway; UMP from orotate: step 2/2. The polypeptide is Orotidine 5'-phosphate decarboxylase (Mycobacterium marinum (strain ATCC BAA-535 / M)).